A 619-amino-acid polypeptide reads, in one-letter code: Chaperone protein HscA homolog (619 aa).

Belongs to the heat shock protein 70 family.

In terms of biological role, chaperone involved in the maturation of iron-sulfur cluster-containing proteins. Has a low intrinsic ATPase activity which is markedly stimulated by HscB. The protein is Chaperone protein HscA homolog of Methylococcus capsulatus (strain ATCC 33009 / NCIMB 11132 / Bath).